A 201-amino-acid polypeptide reads, in one-letter code: Adenylyl-sulfate kinase (201 aa).

35–42 provides a ligand contact to ATP; sequence GLSGSGKS. Ser109 functions as the Phosphoserine intermediate in the catalytic mechanism.

It belongs to the APS kinase family.

It catalyses the reaction adenosine 5'-phosphosulfate + ATP = 3'-phosphoadenylyl sulfate + ADP + H(+). The protein operates within sulfur metabolism; hydrogen sulfide biosynthesis; sulfite from sulfate: step 2/3. In terms of biological role, catalyzes the synthesis of activated sulfate. The chain is Adenylyl-sulfate kinase from Escherichia coli (strain ATCC 8739 / DSM 1576 / NBRC 3972 / NCIMB 8545 / WDCM 00012 / Crooks).